The following is a 664-amino-acid chain: Intraflagellar transport protein 70B (664 aa).

TPR repeat units lie at residues aspartate 11–serine 44, arginine 45–leucine 78, tyrosine 153–glutamine 186, aspartate 188–glutamine 220, leucine 385–threonine 418, isoleucine 423–histidine 456, and valine 458–asparagine 491. Positions tyrosine 507–aspartate 534 form a coiled coil. The TPR 8 repeat unit spans residues cysteine 543–lysine 576.

This sequence belongs to the TTC30/dfy-1/fleer family. In terms of assembly, interacts with the IFT B complex components IFT27, IFT46, IFT74, IFT52, IFT57, IFT80, IFT81 and IFT88. Interacts with KIF17.

It localises to the cell projection. It is found in the cilium. Its function is as follows. Required for polyglutamylation of axonemal tubulin. Plays a role in anterograde intraflagellar transport (IFT), the process by which cilia precursors are transported from the base of the cilium to the site of their incorporation at the tip. The sequence is that of Intraflagellar transport protein 70B (Ift70b) from Rattus norvegicus (Rat).